A 212-amino-acid chain; its full sequence is Pyrrolidone-carboxylate peptidase (212 aa).

Residues E80, C143, and H165 contribute to the active site.

Belongs to the peptidase C15 family. Homotetramer.

The protein resides in the cytoplasm. The catalysed reaction is Release of an N-terminal pyroglutamyl group from a polypeptide, the second amino acid generally not being Pro.. Functionally, removes 5-oxoproline from various penultimate amino acid residues except L-proline. In Vibrio vulnificus (strain YJ016), this protein is Pyrrolidone-carboxylate peptidase.